We begin with the raw amino-acid sequence, 565 residues long: MNYEGARSERENHAADDSEGGALDMCCSERLPGLPQPIVMEALDEAEGLQDSQREMPPPPPPSPPSDPAQKPPPRGAGSHSLTVRSSLCLFAASQFLLACGVLWFSGYGHIWSQNATNLVSSLLTLLKQLEPTAWLDSGTWGVPSLLLVFLSVGLVLVTTLVWHLLRTPPEPPTPLPPEDRRQSVSRQPSFTYSEWMEEKIEDDFLDLDPVPETPVFDCVMDIKPEADPTSLTVKSMGLQERRGSNVSLTLDMCTPGCNEEGFGYLMSPREESAREYLLSASRVLQAEELHEKALDPFLLQAEFFEIPMNFVDPKEYDIPGLVRKNRYKTILPNPHSRVCLTSPDPDDPLSSYINANYIRGYGGEEKVYIATQGPIVSTVADFWRMVWQEHTPIIVMITNIEEMNEKCTEYWPEEQVAYDGVEITVQKVIHTEDYRLRLISLKSGTEERGLKHYWFTSWPDQKTPDRAPPLLHLVREVEEAAQQEGPHCAPIIVHCSAGIGRTGCFIATSICCQQLRQEGVVDILKTTCQLRQDRGGMIQTCEQYQFVHHVMSLYEKQLSHQSPE.

The segment covering 1 to 16 (MNYEGARSERENHAAD) has biased composition (basic and acidic residues). Positions 1–80 (MNYEGARSER…KPPPRGAGSH (80 aa)) are disordered. Residues 56-75 (MPPPPPPSPPSDPAQKPPPR) are compositionally biased toward pro residues. A run of 2 helical transmembrane segments spans residues 88–108 (LCLF…FSGY) and 146–166 (LLLV…WHLL). The segment at 169–189 (PPEPPTPLPPEDRRQSVSRQP) is disordered. Serine 245 bears the Phosphoserine; by PKA mark. At threonine 255 the chain carries Phosphothreonine; by MAPK. Residue serine 268 is modified to Phosphoserine; by MAPK. The Tyrosine-protein phosphatase domain occupies 300 to 555 (LQAEFFEIPM…QFVHHVMSLY (256 aa)). Residues aspartate 461, 496-502 (CSAGIGR), and glutamine 540 each bind substrate. Catalysis depends on cysteine 496, which acts as the Phosphocysteine intermediate.

Belongs to the protein-tyrosine phosphatase family. Non-receptor class subfamily. In terms of processing, phosphorylation at Ser-245 by PKA deactivates PTPN5. Phosphorylation at Thr-255 and Ser-268 by MAPKs stabilizes the phosphatase, dephosphorylation of these sites results in ubiquitin-mediated degradation of the active phosphatase.

It is found in the endoplasmic reticulum membrane. The enzyme catalyses O-phospho-L-tyrosyl-[protein] + H2O = L-tyrosyl-[protein] + phosphate. May regulate the activity of several effector molecules involved in synaptic plasticity and neuronal cell survival, including MAPKs, Src family kinases and NMDA receptors. In Homo sapiens (Human), this protein is Tyrosine-protein phosphatase non-receptor type 5 (PTPN5).